Here is a 339-residue protein sequence, read N- to C-terminus: Holliday junction branch migration complex subunit RuvB (339 aa).

The interval 2-187 (KDVNEEERII…FGIIEHMQYY (186 aa)) is large ATPase domain (RuvB-L). ATP-binding positions include Leu26, Arg27, Gly68, Lys71, Thr72, Thr73, 134 to 136 (EDF), Arg177, Tyr187, and Arg224. Thr72 is a binding site for Mg(2+). The tract at residues 188-258 (SVEDLEKIIQ…TTKHSLHLLE (71 aa)) is small ATPAse domain (RuvB-S). Residues 261 to 339 (DEGLDQTDRK…QLGYPPKDEK (79 aa)) form a head domain (RuvB-H) region. 2 residues coordinate DNA: Arg316 and Arg321.

The protein belongs to the RuvB family. Homohexamer. Forms an RuvA(8)-RuvB(12)-Holliday junction (HJ) complex. HJ DNA is sandwiched between 2 RuvA tetramers; dsDNA enters through RuvA and exits via RuvB. An RuvB hexamer assembles on each DNA strand where it exits the tetramer. Each RuvB hexamer is contacted by two RuvA subunits (via domain III) on 2 adjacent RuvB subunits; this complex drives branch migration. In the full resolvosome a probable DNA-RuvA(4)-RuvB(12)-RuvC(2) complex forms which resolves the HJ.

Its subcellular location is the cytoplasm. It catalyses the reaction ATP + H2O = ADP + phosphate + H(+). In terms of biological role, the RuvA-RuvB-RuvC complex processes Holliday junction (HJ) DNA during genetic recombination and DNA repair, while the RuvA-RuvB complex plays an important role in the rescue of blocked DNA replication forks via replication fork reversal (RFR). RuvA specifically binds to HJ cruciform DNA, conferring on it an open structure. The RuvB hexamer acts as an ATP-dependent pump, pulling dsDNA into and through the RuvAB complex. RuvB forms 2 homohexamers on either side of HJ DNA bound by 1 or 2 RuvA tetramers; 4 subunits per hexamer contact DNA at a time. Coordinated motions by a converter formed by DNA-disengaged RuvB subunits stimulates ATP hydrolysis and nucleotide exchange. Immobilization of the converter enables RuvB to convert the ATP-contained energy into a lever motion, pulling 2 nucleotides of DNA out of the RuvA tetramer per ATP hydrolyzed, thus driving DNA branch migration. The RuvB motors rotate together with the DNA substrate, which together with the progressing nucleotide cycle form the mechanistic basis for DNA recombination by continuous HJ branch migration. Branch migration allows RuvC to scan DNA until it finds its consensus sequence, where it cleaves and resolves cruciform DNA. The sequence is that of Holliday junction branch migration complex subunit RuvB from Lactobacillus johnsonii (strain CNCM I-12250 / La1 / NCC 533).